Consider the following 90-residue polypeptide: Probable Fe(2+)-trafficking protein (90 aa).

The protein belongs to the Fe(2+)-trafficking protein family.

In terms of biological role, could be a mediator in iron transactions between iron acquisition and iron-requiring processes, such as synthesis and/or repair of Fe-S clusters in biosynthetic enzymes. The protein is Probable Fe(2+)-trafficking protein of Paraburkholderia xenovorans (strain LB400).